We begin with the raw amino-acid sequence, 164 residues long: Peptidyl-prolyl cis-trans isomerase A-like 4H (164 aa).

A PPIase cyclophilin-type domain is found at 7–163 (FFDITVDGKP…KKITIADCGQ (157 aa)). N-linked (GlcNAc...) asparagine glycosylation is found at asparagine 71 and asparagine 108.

It belongs to the cyclophilin-type PPIase family. PPIase A subfamily.

The protein localises to the cytoplasm. The enzyme catalyses [protein]-peptidylproline (omega=180) = [protein]-peptidylproline (omega=0). PPIases accelerate the folding of proteins. It catalyzes the cis-trans isomerization of proline imidic peptide bonds in oligopeptides. This chain is Peptidyl-prolyl cis-trans isomerase A-like 4H, found in Homo sapiens (Human).